The following is a 38-amino-acid chain: Photosystem II reaction center protein L (38 aa).

A helical transmembrane segment spans residues 17 to 37; the sequence is SLFWGLLLIFVLAVLFSSYFF.

The protein belongs to the PsbL family. In terms of assembly, PSII is composed of 1 copy each of membrane proteins PsbA, PsbB, PsbC, PsbD, PsbE, PsbF, PsbH, PsbI, PsbJ, PsbK, PsbL, PsbM, PsbT, PsbX, PsbY, PsbZ, Psb30/Ycf12, at least 3 peripheral proteins of the oxygen-evolving complex and a large number of cofactors. It forms dimeric complexes.

The protein resides in the plastid. The protein localises to the chloroplast thylakoid membrane. One of the components of the core complex of photosystem II (PSII). PSII is a light-driven water:plastoquinone oxidoreductase that uses light energy to abstract electrons from H(2)O, generating O(2) and a proton gradient subsequently used for ATP formation. It consists of a core antenna complex that captures photons, and an electron transfer chain that converts photonic excitation into a charge separation. This subunit is found at the monomer-monomer interface and is required for correct PSII assembly and/or dimerization. This is Photosystem II reaction center protein L from Zygnema circumcarinatum (Green alga).